Reading from the N-terminus, the 94-residue chain is Cell division topological specificity factor (94 aa).

Belongs to the MinE family.

In terms of biological role, prevents the cell division inhibition by proteins MinC and MinD at internal division sites while permitting inhibition at polar sites. This ensures cell division at the proper site by restricting the formation of a division septum at the midpoint of the long axis of the cell. This chain is Cell division topological specificity factor, found in Clostridioides difficile (strain 630) (Peptoclostridium difficile).